A 475-amino-acid chain; its full sequence is Pregnancy-specific glycoprotein 22 (475 aa).

Positions 1-35 (MEVSSELLSNGWTSWQRVLLTASLLTCWLLPITAG) are cleaved as a signal peptide. 3 Ig-like V-type domains span residues 44–140 (KLVE…FLQV), 162–260 (PASV…YLQV), and 280–380 (PVPP…QVNV). 3 N-linked (GlcNAc...) asparagine glycosylation sites follow: N103, N110, and N231. Residues 387–471 (PVMRVTDSTV…SKTSLPVRLT (85 aa)) enclose the Ig-like C2-type domain. A disulfide bond links C406 and C454.

The protein belongs to the immunoglobulin superfamily. CEA family.

It is found in the secreted. Functionally, may have an angiogenic function during early placental development. Binds to cell-surface heparan sulfate proteoglycans (HSPGs), and stimulates secretion of the proangiogenic factors VEGFA and TGFB from uterine dendritic cells and natural killer cells. Also induces endothelial tube formation in vitro. The chain is Pregnancy-specific glycoprotein 22 from Mus musculus (Mouse).